The following is a 216-amino-acid chain: Ribosomal RNA small subunit methyltransferase G (216 aa).

S-adenosyl-L-methionine-binding positions include Gly73, Leu78, 124 to 125, and Arg139; that span reads AE.

The protein belongs to the methyltransferase superfamily. RNA methyltransferase RsmG family.

It is found in the cytoplasm. Specifically methylates the N7 position of guanine in position 518 of 16S rRNA. The chain is Ribosomal RNA small subunit methyltransferase G from Paenarthrobacter aurescens (strain TC1).